The chain runs to 341 residues: Methionine import ATP-binding protein MetN 2 (341 aa).

The region spanning 2-241 (IQFKNISKHY…PQHPTTKTFI (240 aa)) is the ABC transporter domain. 38–45 (GYSGAGKS) provides a ligand contact to ATP.

This sequence belongs to the ABC transporter superfamily. Methionine importer (TC 3.A.1.24) family. In terms of assembly, the complex is composed of two ATP-binding proteins (MetN), two transmembrane proteins (MetI) and a solute-binding protein (MetQ).

It localises to the cell inner membrane. The catalysed reaction is L-methionine(out) + ATP + H2O = L-methionine(in) + ADP + phosphate + H(+). The enzyme catalyses D-methionine(out) + ATP + H2O = D-methionine(in) + ADP + phosphate + H(+). In terms of biological role, part of the ABC transporter complex MetNIQ involved in methionine import. Responsible for energy coupling to the transport system. This is Methionine import ATP-binding protein MetN 2 from Acinetobacter baylyi (strain ATCC 33305 / BD413 / ADP1).